Consider the following 326-residue polypeptide: uncharacterized protein (326 aa).

S132 provides a ligand contact to substrate. The active-site Proton acceptor is the Y157.

Belongs to the NAD(P)-dependent epimerase/dehydratase family. dTDP-glucose dehydratase subfamily.

This is an uncharacterized protein from Methanocaldococcus jannaschii (strain ATCC 43067 / DSM 2661 / JAL-1 / JCM 10045 / NBRC 100440) (Methanococcus jannaschii).